We begin with the raw amino-acid sequence, 453 residues long: uncharacterized protein (453 aa).

Residues Cys74, Cys80, Cys83, and Cys162 each coordinate [4Fe-4S] cluster. 4 residues coordinate S-adenosyl-L-methionine: Gln286, Tyr315, Glu336, and Asp384. Cys411 functions as the Nucleophile in the catalytic mechanism.

This sequence belongs to the class I-like SAM-binding methyltransferase superfamily. RNA M5U methyltransferase family.

This is an uncharacterized protein from Staphylococcus aureus (strain Mu50 / ATCC 700699).